The sequence spans 113 residues: Small ribosomal subunit protein bS16 (113 aa).

The disordered stretch occupies residues 84–113 (PKPAYTEQPKKSAPKKRAQERAAAAAAAAA).

Belongs to the bacterial ribosomal protein bS16 family.

The polypeptide is Small ribosomal subunit protein bS16 (Gluconacetobacter diazotrophicus (strain ATCC 49037 / DSM 5601 / CCUG 37298 / CIP 103539 / LMG 7603 / PAl5)).